A 1109-amino-acid polypeptide reads, in one-letter code: Coiled-coil domain-containing protein 158 (1109 aa).

The span at 1-12 (MESKACESKNED) shows a compositional bias: basic and acidic residues. The tract at residues 1–31 (MESKACESKNEDLLPSGITSKGGSSSPFFVT) is disordered. Positions 17 to 31 (GITSKGGSSSPFFVT) are enriched in polar residues. Coiled coils occupy residues 71–166 (GKEH…MLKD) and 242–828 (VEDQ…QEQE). Disordered regions lie at residues 843 to 897 (LQGP…DPTR) and 952 to 1061 (HRSN…TGKT). 3 stretches are compositionally biased toward polar residues: residues 862-882 (ASVT…SFLS), 953-970 (RSNN…SSET), and 988-998 (SCFTFTSTASP). The segment covering 999-1019 (SGKMSASRSFSSSPKKSPVHS) has biased composition (low complexity). Composition is skewed to polar residues over residues 1020–1037 (LLTS…QYRS) and 1043–1061 (SPTS…TGKT). A coiled-coil region spans residues 1053–1109 (PSLETTGKTCQKLQNRLESLQTLVEDLQLKNQAMSSMIRNQEKRIQKVKDQEKMLLK).

This is Coiled-coil domain-containing protein 158 (Ccdc158) from Mus musculus (Mouse).